The sequence spans 309 residues: Probable 2,4-dienoyl-CoA reductase 3 [(3E)-enoyl-CoA-producing] (309 aa).

NADP(+) contacts are provided by residues 32–37 (GGGTGI), Arg57, and Asp83. A substrate-binding site is contributed by Arg57. The substrate site is built by Phe116 and Ser124. The active-site Proton acceptor is the Tyr166. Residues Lys181 and 207–210 (PGPI) contribute to the NADP(+) site. Residue Arg218 participates in substrate binding.

It belongs to the short-chain dehydrogenases/reductases (SDR) family. 2,4-dienoyl-CoA reductase subfamily.

It catalyses the reaction a (2E,4E)-dienoyl-CoA + NADPH + H(+) = a 4,5-saturated-(3E)-enoyl-CoA + NADP(+). The enzyme catalyses a (2E,4Z)-dienoyl-CoA + NADPH + H(+) = a 4,5-saturated-(3E)-enoyl-CoA + NADP(+). Auxiliary enzyme of beta-oxidation. It participates in the metabolism of unsaturated fatty enoyl-CoA esters having double bonds in both even- and odd-numbered positions. Catalyzes the NADP-dependent reduction of 2,4-dienoyl-CoA to yield trans-3-enoyl-CoA. In Caenorhabditis elegans, this protein is Probable 2,4-dienoyl-CoA reductase 3 [(3E)-enoyl-CoA-producing].